The sequence spans 296 residues: MSLEPAMTTPDVLRVEVLSEALPYIQRFRGRRVVIKYGGAAMVREDLRDAVFRDVALLASVGVEPVVVHGGGPEINQWLNRLSIEPVFQEGLRVTCPDTMDVVEMVLVGRVNKQIVNGLNRVGGRAVGLSGADGGLVQARTHGDGSLGLVGDVAQVDPSVIIPLLDQGYIPVISSVAPNHEGQPYNINADTVAGELAAAMDAEKLILLTDTPGILRDRDDPESLIDQLSLSEARELIHAGVVAGGMVPKTECCIRALAQGVRAAHILDGRVPHSLLLEVFTNSGIGTMVLGSRQQG.

Residues 71–72, Arg-93, and Asn-186 contribute to the substrate site; that span reads GG.

It belongs to the acetylglutamate kinase family. ArgB subfamily.

Its subcellular location is the cytoplasm. The catalysed reaction is N-acetyl-L-glutamate + ATP = N-acetyl-L-glutamyl 5-phosphate + ADP. It participates in amino-acid biosynthesis; L-arginine biosynthesis; N(2)-acetyl-L-ornithine from L-glutamate: step 2/4. Functionally, catalyzes the ATP-dependent phosphorylation of N-acetyl-L-glutamate. The sequence is that of Acetylglutamate kinase from Synechococcus sp. (strain RCC307).